The chain runs to 129 residues: Small ribosomal subunit protein eS6 (129 aa).

Residues glutamine 106–glutamate 129 form a disordered region.

The protein belongs to the eukaryotic ribosomal protein eS6 family.

The protein is Small ribosomal subunit protein eS6 of Natronomonas pharaonis (strain ATCC 35678 / DSM 2160 / CIP 103997 / JCM 8858 / NBRC 14720 / NCIMB 2260 / Gabara) (Halobacterium pharaonis).